The sequence spans 126 residues: Histone H2B 1.2 (126 aa).

Low complexity predominate over residues 1 to 12; it reads MPEPAKSAPAPK. The interval 1-35 is disordered; the sequence is MPEPAKSAPAPKKGSKKAVTKTPKKDGKKRRKSRK. An N6-acetyllysine mark is found at lysine 6 and lysine 13. Phosphoserine is present on serine 15. N6-acetyllysine is present on residues lysine 16 and lysine 21. A glycan (O-linked (GlcNAc) serine) is linked at serine 113. Lysine 121 is covalently cross-linked (Glycyl lysine isopeptide (Lys-Gly) (interchain with G-Cter in ubiquitin)).

Belongs to the histone H2B family. In terms of assembly, the nucleosome is a histone octamer containing two molecules each of H2A, H2B, H3 and H4 assembled in one H3-H4 heterotetramer and two H2A-H2B heterodimers. The octamer wraps approximately 147 bp of DNA. In terms of processing, monoubiquitination of Lys-121 by BRE1 gives a specific tag for epigenetic transcriptional activation and is also prerequisite for histone H3 'Lys-4' and 'Lys-79' methylation. Phosphorylated on Ser-15 during developmentally programmed apoptosis; which may facilitate apoptotic chromatin condensation. Post-translationally, glcNAcylation at Ser-113 promotes monoubiquitination of Lys-121. It fluctuates in response to extracellular glucose, and associates with transcribed genes.

The protein localises to the nucleus. It is found in the chromosome. Core component of nucleosome. Nucleosomes wrap and compact DNA into chromatin, limiting DNA accessibility to the cellular machineries which require DNA as a template. Histones thereby play a central role in transcription regulation, DNA repair, DNA replication and chromosomal stability. DNA accessibility is regulated via a complex set of post-translational modifications of histones, also called histone code, and nucleosome remodeling. The polypeptide is Histone H2B 1.2 (Xenopus laevis (African clawed frog)).